Reading from the N-terminus, the 364-residue chain is Melatonin receptor type 1B (364 aa).

Residues 1–28 form the signal peptide; the sequence is MPDNSSIANCCAASGLAARPSWPGSAEA. The Extracellular segment spans residues 29–45; sequence EPPETPRAPWVAPMLST. Residues 46–66 form a helical membrane-spanning segment; the sequence is VVIVTTAVDFVGNLLVILSVL. Residues 67 to 81 lie on the Cytoplasmic side of the membrane; that stretch reads RNRKLRNAGNLFVVN. Residues 82–102 form a helical membrane-spanning segment; sequence LALADLVVALYPYPLILVAIL. Topologically, residues 103–115 are extracellular; it reads HDGWVLGEIHCKA. A disulfide bond links Cys-113 and Cys-190. Residues 116–136 form a helical membrane-spanning segment; the sequence is SAFVMGLSVIGSVFNITAIAI. The Cytoplasmic portion of the chain corresponds to 137–158; sequence NRYWCICHSATYHRACSQWHAP. A helical transmembrane segment spans residues 159-179; the sequence is LYISLIWLLTLVALVPNFFVG. The Extracellular portion of the chain corresponds to 180–200; it reads SLEYDPRIYSCTFIQTASTQY. Residues 201-221 traverse the membrane as a helical segment; it reads TMAVVAIHFLLPIAVVSFCYL. Topologically, residues 222 to 255 are cytoplasmic; the sequence is RIWILVLQARRKAKAERKLRLRPSDLRSFLTMFA. Residues 256–276 traverse the membrane as a helical segment; sequence VFVVFAICWAPLNCIGLAVAI. The Extracellular portion of the chain corresponds to 277–287; that stretch reads NPEAMALQIPE. The chain crosses the membrane as a helical span at residues 288 to 308; sequence GLFVTSYFLAYFNSCLNAIVY. Over 309 to 364 the chain is Cytoplasmic; that stretch reads GLLNQNFRREYKRILSALWSTGRCFHDASKCHLTEDLQGPVPPAAMATIPVQEGAL.

The protein belongs to the G-protein coupled receptor 1 family. In terms of tissue distribution, expressed in the hippocampus, kidney, and ovary.

The protein localises to the cell membrane. Its function is as follows. High affinity receptor for melatonin. The activity of this receptor is mediated by pertussis toxin sensitive G proteins that inhibits adenylate cyclase activity. This Rattus norvegicus (Rat) protein is Melatonin receptor type 1B.